Reading from the N-terminus, the 1141-residue chain is Serine-aspartate repeat-containing protein E (1141 aa).

The first 52 residues, 1–52, serve as a signal peptide directing secretion; that stretch reads MINRDNKKAITKKGMISNRLNKFSIRKYTVGTASILVGTTLIFGLGNQEAKA. Residues 23–34 carry the YSIRK-G/S signaling motif motif; the sequence is FSIRKYTVGTAS. Positions 53-601 are ligand binding A region; sequence AENTSTENAK…GDGTVKPEEK (549 aa). The disordered stretch occupies residues 54–225; the sequence is ENTSTENAKQ…SKEELKNNPE (172 aa). Positions 61–75 are enriched in basic and acidic residues; sequence AKQDDATTSDNKEVV. The span at 77–90 shows a compositional bias: low complexity; that stretch reads EAENNSTTENDSTN. Over residues 92–109 the composition is skewed to basic and acidic residues; it reads IKKETNTDSQPEAKEEST. Residues 110–126 show a composition bias toward low complexity; it reads KSSTQQQQNNVTATTET. Over residues 130-145 the composition is skewed to basic and acidic residues; sequence NIEKENVKPSTDKTAT. Residues 158-207 show a composition bias toward polar residues; the sequence is PNNTNNDVTTKPSTSEIQTKPTTPQESTNIENSQPQPTPSKVDNQVTDAT. Residues 216–225 are compositionally biased toward basic and acidic residues; the sequence is SKEELKNNPE. 3 consecutive CNA-B domains span residues 602–714, 715–824, and 825–935; these read LYKI…YKEP, KYNL…YKTP, and KYSL…EEDT. A disordered region spans residues 899–1117; the sequence is VTNTTEDDKD…GSENNGSNNA (219 aa). Acidic residues-rich tracts occupy residues 903–913 and 930–1080; these read TEDDKDADGGE and YFEE…DSDS. Positions 1104–1108 match the LPXTG sorting signal motif; sequence LPETG. At Thr1107 the chain carries Pentaglycyl murein peptidoglycan amidated threonine. Positions 1108–1141 are cleaved as a propeptide — removed by sortase; that stretch reads GSENNGSNNATLFGGLFAALGSLLLFGRRKKQNK.

This sequence belongs to the serine-aspartate repeat-containing protein (SDr) family. As to quaternary structure, interacts with host complement factor H/CFAH (via C-terminus). Interacts with host complement regulator C4BPA.

The protein localises to the secreted. It localises to the cell wall. In terms of biological role, cell surface-associated calcium-binding protein which plays an important role in adhesion and pathogenesis. Contributes to the resistance to killing by innate immune components in blood and thus attenuates bacterial clearance by interacting with host complement factor H/CFAH and modulating its activity. Also inhibits bacterial opsonization and killing by interacting with host complement regulator C4BPA and thus inhibiting classical complement pathway activation. The chain is Serine-aspartate repeat-containing protein E (sdrE) from Staphylococcus aureus (strain MSSA476).